Here is a 615-residue protein sequence, read N- to C-terminus: Dihydroxy-acid dehydratase (615 aa).

A Mg(2+)-binding site is contributed by Asp-81. A [2Fe-2S] cluster-binding site is contributed by Cys-122. Mg(2+)-binding residues include Asp-123 and Lys-124. Lys-124 bears the N6-carboxylysine mark. Residue Cys-195 participates in [2Fe-2S] cluster binding. Glu-491 lines the Mg(2+) pocket. Ser-517 functions as the Proton acceptor in the catalytic mechanism.

It belongs to the IlvD/Edd family. As to quaternary structure, homodimer. [2Fe-2S] cluster serves as cofactor. Requires Mg(2+) as cofactor.

The catalysed reaction is (2R)-2,3-dihydroxy-3-methylbutanoate = 3-methyl-2-oxobutanoate + H2O. It catalyses the reaction (2R,3R)-2,3-dihydroxy-3-methylpentanoate = (S)-3-methyl-2-oxopentanoate + H2O. Its pathway is amino-acid biosynthesis; L-isoleucine biosynthesis; L-isoleucine from 2-oxobutanoate: step 3/4. It participates in amino-acid biosynthesis; L-valine biosynthesis; L-valine from pyruvate: step 3/4. Functions in the biosynthesis of branched-chain amino acids. Catalyzes the dehydration of (2R,3R)-2,3-dihydroxy-3-methylpentanoate (2,3-dihydroxy-3-methylvalerate) into 2-oxo-3-methylpentanoate (2-oxo-3-methylvalerate) and of (2R)-2,3-dihydroxy-3-methylbutanoate (2,3-dihydroxyisovalerate) into 2-oxo-3-methylbutanoate (2-oxoisovalerate), the penultimate precursor to L-isoleucine and L-valine, respectively. This Pseudoalteromonas atlantica (strain T6c / ATCC BAA-1087) protein is Dihydroxy-acid dehydratase.